The primary structure comprises 458 residues: UDP-N-acetylmuramoylalanine--D-glutamate ligase (458 aa).

124 to 130 contributes to the ATP binding site; it reads GSDGKTT.

Belongs to the MurCDEF family.

The protein resides in the cytoplasm. It carries out the reaction UDP-N-acetyl-alpha-D-muramoyl-L-alanine + D-glutamate + ATP = UDP-N-acetyl-alpha-D-muramoyl-L-alanyl-D-glutamate + ADP + phosphate + H(+). The protein operates within cell wall biogenesis; peptidoglycan biosynthesis. Functionally, cell wall formation. Catalyzes the addition of glutamate to the nucleotide precursor UDP-N-acetylmuramoyl-L-alanine (UMA). The polypeptide is UDP-N-acetylmuramoylalanine--D-glutamate ligase (Clostridium kluyveri (strain NBRC 12016)).